Here is a 218-residue protein sequence, read N- to C-terminus: UPF0319 protein PM0395 (218 aa).

The first 21 residues, 1-21 (MKFRFAALASVALLTSTVSVA), serve as a signal peptide directing secretion.

It belongs to the UPF0319 family.

The protein is UPF0319 protein PM0395 of Pasteurella multocida (strain Pm70).